We begin with the raw amino-acid sequence, 1013 residues long: RNA-binding protein 44 (1013 aa).

2 disordered regions span residues 1 to 25 (MQAT…FQND) and 56 to 94 (LATE…IFSQ). A compositionally biased stretch (basic and acidic residues) spans 56-76 (LATEERASDKENSIVDQRDLS). Polar residues predominate over residues 78–94 (LSFSENQDSNRGNIFSQ). Residues Ser-365, Ser-368, Ser-510, Ser-681, and Ser-688 each carry the phosphoserine modification. In terms of domain architecture, RRM spans 792 to 865 (FLIHVGGLCP…KSVTVRLVKI (74 aa)). Residues 905–925 (RAKSRQLESEQDSEFPPLDQG) form a disordered region.

Homodimer. Interacts with TEX14. As to expression, highly expressed in testis. Also expressed in other tissues at lower level.

The protein resides in the cytoplasm. In terms of biological role, component of intercellular bridges during meiosis. Intercellular bridges are evolutionarily conserved structures that connect differentiating germ cells. Not required for fertility. In Mus musculus (Mouse), this protein is RNA-binding protein 44 (Rbm44).